The following is a 252-amino-acid chain: 3-dehydroquinate dehydratase (252 aa).

Residues serine 21, 46–48 (EWR), and arginine 82 each bind 3-dehydroquinate. Catalysis depends on histidine 143, which acts as the Proton donor/acceptor. Lysine 170 functions as the Schiff-base intermediate with substrate in the catalytic mechanism. 3-dehydroquinate-binding residues include arginine 213, serine 232, and glutamine 236.

Belongs to the type-I 3-dehydroquinase family. Homodimer.

The catalysed reaction is 3-dehydroquinate = 3-dehydroshikimate + H2O. Its pathway is metabolic intermediate biosynthesis; chorismate biosynthesis; chorismate from D-erythrose 4-phosphate and phosphoenolpyruvate: step 3/7. Its function is as follows. Involved in the third step of the chorismate pathway, which leads to the biosynthesis of aromatic amino acids. Catalyzes the cis-dehydration of 3-dehydroquinate (DHQ) and introduces the first double bond of the aromatic ring to yield 3-dehydroshikimate. This chain is 3-dehydroquinate dehydratase, found in Shigella flexneri serotype 5b (strain 8401).